We begin with the raw amino-acid sequence, 785 residues long: Ribosome biogenesis protein BOP1 homolog (785 aa).

The segment covering 1–11 (MTKKLTIKRKV) has biased composition (basic residues). The disordered stretch occupies residues 1–160 (MTKKLTIKRK…DSDTSDEEDI (160 aa)). Acidic residues-rich tracts occupy residues 45–54 (EDSTDDEGID), 61–73 (SSED…DEEG), and 85–102 (SGDD…EDDA). The segment covering 103-112 (DAKKSSKNND) has biased composition (basic and acidic residues). Positions 150-159 (ADSDTSDEED) are enriched in acidic residues. WD repeat units follow at residues 446 to 487 (GHTD…RTIE), 489 to 527 (EDVV…KLLV), 571 to 613 (THFK…SQIP), 616 to 654 (KSKG…LIKK), 657 to 696 (TNSK…KPYQ), 700 to 739 (LHRN…DLLQ), and 755 to 785 (REEF…RLFT).

The protein belongs to the WD repeat BOP1/ERB1 family.

Its subcellular location is the nucleus. The protein localises to the nucleolus. It is found in the nucleoplasm. Its function is as follows. Required for maturation of ribosomal RNAs and formation of the large ribosomal subunit. The protein is Ribosome biogenesis protein BOP1 homolog of Drosophila persimilis (Fruit fly).